Here is a 160-residue protein sequence, read N- to C-terminus: S-adenosylmethionine decarboxylase proenzyme (160 aa).

S73 functions as the Schiff-base intermediate with substrate; via pyruvic acid in the catalytic mechanism. Pyruvic acid (Ser); by autocatalysis is present on S73. The active-site Proton acceptor; for processing activity is the H78. C93 (proton donor; for catalytic activity) is an active-site residue.

Belongs to the prokaryotic AdoMetDC family. Type 1 subfamily. In terms of assembly, heterotetramer of two alpha and two beta chains arranged as a dimer of alpha/beta heterodimers. It depends on pyruvate as a cofactor. In terms of processing, is synthesized initially as an inactive proenzyme. Formation of the active enzyme involves a self-maturation process in which the active site pyruvoyl group is generated from an internal serine residue via an autocatalytic post-translational modification. Two non-identical subunits are generated from the proenzyme in this reaction, and the pyruvate is formed at the N-terminus of the alpha chain, which is derived from the carboxyl end of the proenzyme. The post-translation cleavage follows an unusual pathway, termed non-hydrolytic serinolysis, in which the side chain hydroxyl group of the serine supplies its oxygen atom to form the C-terminus of the beta chain, while the remainder of the serine residue undergoes an oxidative deamination to produce ammonia and the pyruvoyl group blocking the N-terminus of the alpha chain.

It carries out the reaction S-adenosyl-L-methionine + H(+) = S-adenosyl 3-(methylsulfanyl)propylamine + CO2. It functions in the pathway amine and polyamine biosynthesis; S-adenosylmethioninamine biosynthesis; S-adenosylmethioninamine from S-adenosyl-L-methionine: step 1/1. Catalyzes the decarboxylation of S-adenosylmethionine to S-adenosylmethioninamine (dcAdoMet), the propylamine donor required for the synthesis of the polyamines spermine and spermidine from the diamine putrescine. The sequence is that of S-adenosylmethionine decarboxylase proenzyme from Pseudomonas paraeruginosa (strain DSM 24068 / PA7) (Pseudomonas aeruginosa (strain PA7)).